Reading from the N-terminus, the 268-residue chain is tRNA pseudouridine synthase A (268 aa).

The active-site Nucleophile is the Asp54. Tyr112 provides a ligand contact to substrate.

Belongs to the tRNA pseudouridine synthase TruA family. In terms of assembly, homodimer.

It carries out the reaction uridine(38/39/40) in tRNA = pseudouridine(38/39/40) in tRNA. In terms of biological role, formation of pseudouridine at positions 38, 39 and 40 in the anticodon stem and loop of transfer RNAs. The chain is tRNA pseudouridine synthase A from Bordetella petrii (strain ATCC BAA-461 / DSM 12804 / CCUG 43448).